The chain runs to 233 residues: Small ribosomal subunit protein uS3 (233 aa).

The 69-residue stretch at Val39–Arg107 folds into the KH type-2 domain.

Belongs to the universal ribosomal protein uS3 family. As to quaternary structure, part of the 30S ribosomal subunit. Forms a tight complex with proteins S10 and S14.

Functionally, binds the lower part of the 30S subunit head. Binds mRNA in the 70S ribosome, positioning it for translation. This Photorhabdus laumondii subsp. laumondii (strain DSM 15139 / CIP 105565 / TT01) (Photorhabdus luminescens subsp. laumondii) protein is Small ribosomal subunit protein uS3.